The sequence spans 728 residues: Elongation factor 2 (728 aa).

Residues 19–261 (EHIRNIAIAA…MVCEHFPNPV (243 aa)) form the tr-type G domain. GTP is bound by residues 28-35 (AHVDHGKT), 94-98 (DTPGH), and 148-151 (NKVD). Histidine 596 bears the Diphthamide mark.

This sequence belongs to the TRAFAC class translation factor GTPase superfamily. Classic translation factor GTPase family. EF-G/EF-2 subfamily.

The protein localises to the cytoplasm. Functionally, catalyzes the GTP-dependent ribosomal translocation step during translation elongation. During this step, the ribosome changes from the pre-translocational (PRE) to the post-translocational (POST) state as the newly formed A-site-bound peptidyl-tRNA and P-site-bound deacylated tRNA move to the P and E sites, respectively. Catalyzes the coordinated movement of the two tRNA molecules, the mRNA and conformational changes in the ribosome. The polypeptide is Elongation factor 2 (Haloarcula marismortui (strain ATCC 43049 / DSM 3752 / JCM 8966 / VKM B-1809) (Halobacterium marismortui)).